A 402-amino-acid chain; its full sequence is Cysteine desulfurase NifS (402 aa).

Pyridoxal 5'-phosphate is bound by residues 72–73 (GT), Asn151, Gln179, and 199–201 (CGH). Residue Lys202 is modified to N6-(pyridoxal phosphate)lysine. Thr237 contributes to the pyridoxal 5'-phosphate binding site. Cys325 acts as the Cysteine persulfide intermediate in catalysis. Residue Cys325 coordinates [2Fe-2S] cluster.

The protein belongs to the class-V pyridoxal-phosphate-dependent aminotransferase family. NifS/IscS subfamily. In terms of assembly, homodimer. Requires pyridoxal 5'-phosphate as cofactor.

The catalysed reaction is (sulfur carrier)-H + L-cysteine = (sulfur carrier)-SH + L-alanine. With respect to regulation, inhibited by equimolar concentrations of p-chloromercuribenzoic acid, iodoacetamide or N-ethylmaleimide. In terms of biological role, catalyzes the removal of elemental sulfur atoms from cysteine to produce alanine. Seems to participate in the biosynthesis of the nitrogenase metalloclusters by providing the inorganic sulfur required for the Fe-S core formation. The chain is Cysteine desulfurase NifS from Azotobacter vinelandii.